The sequence spans 1409 residues: CRISPR-associated endonuclease Cas9 (1409 aa).

Catalysis depends on Asp31, which acts as the For RuvC-like nuclease domain. Asp31, Glu784, and Glu788 together coordinate Mg(2+). An HNH Cas9-type domain is found at 792-949; that stretch reads TNQGKSNSQQ…DKAGFIQRQL (158 aa). His868 serves as the catalytic Proton acceptor for HNH nuclease domain. His1011 provides a ligand contact to Mg(2+). A compositionally biased stretch (basic and acidic residues) spans 1121 to 1130; it reads EQNHGLDRGK. Residues 1121-1151 are disordered; that stretch reads EQNHGLDRGKPKGLFNANLSSKPKPNSNENL. Over residues 1137–1150 the composition is skewed to polar residues; the sequence is ANLSSKPKPNSNEN.

This sequence belongs to the CRISPR-associated protein Cas9 family. Subtype II-A subfamily. Monomer. Binds crRNA and tracrRNA. Mg(2+) is required as a cofactor.

Only has nuclease activity when bound to both gRNAs (crRNA plus tracrRNA). CRISPR (clustered regularly interspaced short palindromic repeat) is an adaptive immune system that provides protection against mobile genetic elements (viruses, transposable elements and conjugative plasmids). CRISPR clusters contain spacers, sequences complementary to antecedent mobile elements, and target invading nucleic acids. CRISPR clusters are transcribed and processed into CRISPR RNA (crRNA). In type II CRISPR systems correct processing of pre-crRNA requires a trans-encoded small RNA (tracrRNA), endogenous ribonuclease 3 (rnc) and Cas9. The tracrRNA serves as a guide for ribonuclease 3-aided processing of pre-crRNA. Cas9/crRNA/tracrRNA endonucleolytically cleaves linear or circular dsDNA target complementary to the spacer yielding blunt ends; Cas9 is inactive in the absence of the 2 guide RNAs (gRNA). Cas9 recognizes a 3'-G-rich protospacer adjacent motif (PAM, TGGTG in this organism) in the CRISPR repeat sequences to help distinguish self versus nonself, as targets within the bacterial CRISPR locus do not have PAMs. PAM recognition is also required for catalytic activity. When the CRISPR3/cas system consisting of cas9-cas1-cas2-csn2-CRISPR3 or just cas9-CRISPR3 is expressed in E.coli it prevents plasmids homologous to spacers 1 or 2 from transforming. This is CRISPR-associated endonuclease Cas9 from Streptococcus thermophilus.